Reading from the N-terminus, the 530-residue chain is Estrogen receptor beta (530 aa).

Residues 1 to 148 (MDIKNSPSSL…GPSSKRDAHF (148 aa)) are modulating. S61 carries the phosphoserine; alternate modification. O-linked (GlcNAc) serine; alternate glycosylation is present at S61. S87 and S105 each carry phosphoserine; by MAPK. NR C4-type zinc fingers lie at residues 149-169 (CAVC…CEGC) and 185-209 (CPAT…LRKC). The segment at residues 149 to 214 (CAVCSDYASG…RLRKCYEVGM (66 aa)) is a DNA-binding region (nuclear receptor). One can recognise an NR LBD domain in the interval 264-498 (SPEQLVLTLL…DLLLEMMNAH (235 aa)). Positions 507–530 (ITGSECSPAEDSKSTEGSQNPQSP) are disordered. Polar residues predominate over residues 521–530 (TEGSQNPQSP).

The protein belongs to the nuclear hormone receptor family. NR3 subfamily. In terms of assembly, binds DNA as a homodimer. Can form a heterodimer with ESR1. Interacts with NCOA1, NCOA3, NCOA5 and NCOA6 coactivators, leading to a strong increase of transcription of target genes. Interacts with UBE1C and AKAP13. Interacts with DNTTIP2. Interacts with CCDC62 in the presence of estradiol/E2; this interaction seems to enhance the transcription of target genes. Interacts with DNAAF4. Interacts with PRMT2. Interacts with CCAR2 (via N-terminus) in a ligand-independent manner. Interacts with RBM39, in the presence of estradiol (E2). Interacts with STUB1/CHIP. Phosphorylation at Ser-87 and Ser-105 recruits NCOA1.

The protein resides in the nucleus. Nuclear hormone receptor. Binds estrogens with an affinity similar to that of ESR1/ER-alpha, and activates expression of reporter genes containing estrogen response elements (ERE) in an estrogen-dependent manner. The polypeptide is Estrogen receptor beta (ESR2) (Callithrix jacchus (White-tufted-ear marmoset)).